The primary structure comprises 89 residues: Small ribosomal subunit protein uS17 (89 aa).

This sequence belongs to the universal ribosomal protein uS17 family. In terms of assembly, part of the 30S ribosomal subunit.

One of the primary rRNA binding proteins, it binds specifically to the 5'-end of 16S ribosomal RNA. The polypeptide is Small ribosomal subunit protein uS17 (Xylella fastidiosa (strain 9a5c)).